We begin with the raw amino-acid sequence, 186 residues long: Calcium load-activated calcium channel homolog (186 aa).

The Cytoplasmic segment spans residues 1 to 6 (MLGDCL). The chain crosses the membrane as a helical span at residues 7–27 (LIIAIAFGTALAGEGITWLLV). Over 28-87 (YRSDHYKRLKADMDKKTKKLEKKKQEVGDTNDKNIKRKLEREEERLKATNRDMSMFKMKS) the chain is Lumenal. Residues 30–86 (SDHYKRLKADMDKKTKKLEKKKQEVGDTNDKNIKRKLEREEERLKATNRDMSMFKMK) adopt a coiled-coil conformation. The chain crosses the membrane as a helical span at residues 88 to 108 (MFAIGLAFTALLSTFNSIFEG). Residues 109–134 (RVVAKLPFYPIGFIQGLSHRNLIGED) are Cytoplasmic-facing. The pore-forming intramembrane region spans 135–151 (MTDCSFIFLYILCTMTV). The Cytoplasmic portion of the chain corresponds to 152–186 (RQNLQKILGFAPSRAMARQQSSPWAPPNSQMNYLR).

Belongs to the TMCO1 family. As to quaternary structure, homodimer and homotetramer.

Its subcellular location is the endoplasmic reticulum membrane. Its function is as follows. Calcium-selective channel required to prevent calcium stores from overfilling. The chain is Calcium load-activated calcium channel homolog from Caenorhabditis elegans.